Reading from the N-terminus, the 394-residue chain is Guanine nucleotide-binding protein G(s) subunit alpha (394 aa).

The segment at 1 to 23 (MGCLGNSKTEDQRNEEKAQREAN) is disordered. Residue Gly2 is the site of N-palmitoyl glycine attachment. Cys3 carries the S-palmitoyl cysteine lipid modification. The span at 8–23 (KTEDQRNEEKAQREAN) shows a compositional bias: basic and acidic residues. In terms of domain architecture, G-alpha spans 39-394 (ATHRLLLLGA…RMHLRQYELL (356 aa)). The G1 motif stretch occupies residues 42–55 (RLLLLGAGESGKST). 47–55 (GAGESGKST) provides a ligand contact to GTP. Ser54 contributes to the Mg(2+) binding site. The tract at residues 68 to 91 (FNGEGGEEDPQAARSNSDGEKATK) is disordered. The segment at 196–204 (DLLRCRVLT) is G2 motif. GTP is bound by residues 197–204 (LLRCRVLT), 223–227 (DVGGQ), 292–295 (NKQD), and Ala366. Thr204 is a binding site for Mg(2+). The interval 219-228 (FHMFDVGGQR) is G3 motif. The tract at residues 288 to 295 (ILFLNKQD) is G4 motif. Positions 364-369 (TCAVDT) are G5 motif.

This sequence belongs to the G-alpha family. G(s) subfamily. Heterotrimeric G proteins are composed of 3 units; alpha, beta and gamma. The alpha chain contains the guanine nucleotide binding site. Interacts with CRY1; the interaction may block GPCR-mediated regulation of cAMP concentrations. Interacts with ADCY6 and stimulates its adenylyl cyclase activity. Interacts with ADCY2 and ADCY5. Stimulates the ADCY5 adenylyl cyclase activity. Interaction with SASH1.

Its subcellular location is the cell membrane. Guanine nucleotide-binding proteins (G proteins) function as transducers in numerous signaling pathways controlled by G protein-coupled receptors (GPCRs). Signaling involves the activation of adenylyl cyclases, resulting in increased levels of the signaling molecule cAMP. GNAS functions downstream of several GPCRs, including beta-adrenergic receptors. Stimulates the Ras signaling pathway via RAPGEF2. The protein is Guanine nucleotide-binding protein G(s) subunit alpha (GNAS) of Canis lupus familiaris (Dog).